A 178-amino-acid polypeptide reads, in one-letter code: ATP synthase subunit b, chloroplastic (178 aa).

Residues 23 to 43 (IFETNIINLAAVVAIVISFVG) traverse the membrane as a helical segment.

It belongs to the ATPase B chain family. In terms of assembly, F-type ATPases have 2 components, F(1) - the catalytic core - and F(0) - the membrane proton channel. F(1) has five subunits: alpha(3), beta(3), gamma(1), delta(1), epsilon(1). F(0) has four main subunits: a(1), b(1), b'(1) and c(10-14). The alpha and beta chains form an alternating ring which encloses part of the gamma chain. F(1) is attached to F(0) by a central stalk formed by the gamma and epsilon chains, while a peripheral stalk is formed by the delta, b and b' chains.

Its subcellular location is the plastid. It localises to the chloroplast thylakoid membrane. Functionally, f(1)F(0) ATP synthase produces ATP from ADP in the presence of a proton or sodium gradient. F-type ATPases consist of two structural domains, F(1) containing the extramembraneous catalytic core and F(0) containing the membrane proton channel, linked together by a central stalk and a peripheral stalk. During catalysis, ATP synthesis in the catalytic domain of F(1) is coupled via a rotary mechanism of the central stalk subunits to proton translocation. Its function is as follows. Component of the F(0) channel, it forms part of the peripheral stalk, linking F(1) to F(0). The polypeptide is ATP synthase subunit b, chloroplastic (Tetradesmus obliquus (Green alga)).